The following is an 898-amino-acid chain: MAVRPGLWPVLLGIVLAAWLRGSGAQQSATVANPVPGANPDLLPHFLVEPEDVYIVKNKPVLLVCKAVPATQIFFKCNGEWVRQVDHVIERSTDSSSGLPTMEVRINVSRQQVEKVFGLEEYWCQCVAWSSSGTTKSQKAYIRIAYLRKNFEQEPLAKEVSLEQGIVLPCRPPEGIPPAEVEWLRNEDLVDPSLDPNVYITREHSLVVRQARLADTANYTCVAKNIVARRRSTSAAVIVYVNGGWSTWTEWSVCSASCGRGWQKRSRSCTNPAPLNGGAFCEGQNVQKTACATLCPVDGSWSSWSKWSACGLDCTHWRSRECSDPAPRNGGEECRGADLDTRNCTSDLCLHTASCPEDVALYIGLVAVAVCLFLLLLALGLIYCRKKEGLDSDVADSSILTSGFQPVSIKPSKADNPHLLTIQPDLSTTTTTYQGSLCSRQDGPSPKFQLSNGHLLSPLGSGRHTLHHSSPTSEAEDFVSRLSTQNYFRSLPRGTSNMAYGTFNFLGGRLMIPNTGISLLIPPDAIPRGKIYEIYLTLHKPEDVRLPLAGCQTLLSPVVSCGPPGVLLTRPVILAMDHCGEPSPDSWSLRLKKQSCEGSWEDVLHLGEESPSHLYYCQLEAGACYVFTEQLGRFALVGEALSVAATKRLRLLLFAPVACTSLEYNIRVYCLHDTHDALKEVVQLEKQLGGQLIQEPRVLHFKDSYHNLRLSIHDVPSSLWKSKLLVSYQEIPFYHIWNGTQQYLHCTFTLERINASTSDLACKVWVWQVEGDGQSFNINFNITKDTRFAELLALESEGGVPALVGPSAFKIPFLIRQKIIASLDPPCSRGADWRTLAQKLHLDSHLSFFASKPSPTAMILNLWEARHFPNGNLGQLAAAVAGLGQPDAGLFTVSEAEC.

An N-terminal signal peptide occupies residues 1–25; the sequence is MAVRPGLWPVLLGIVLAAWLRGSGA. Residues 26–361 lie on the Extracellular side of the membrane; that stretch reads QQSATVANPV…TASCPEDVAL (336 aa). Residues 44-141 form the Ig-like domain; that stretch reads PHFLVEPEDV…SGTTKSQKAY (98 aa). Intrachain disulfides connect Cys65/Cys126, Cys77/Cys124, and Cys170/Cys221. 2 N-linked (GlcNAc...) asparagine glycosylation sites follow: Asn107 and Asn218. Residues 155-238 form the Ig-like C2-type domain; the sequence is PLAKEVSLEQ…RRRSTSAAVI (84 aa). 2 consecutive TSP type-1 domains span residues 242-296 and 298-350; these read NGGW…TLCP and DGSW…DLCL. 3 C-linked (Man) tryptophan glycosylation sites follow: Trp245, Trp248, and Trp251. Disulfide bonds link Cys254–Cys291, Cys258–Cys295, and Cys269–Cys281. Trp301 and Trp304 each carry a C-linked (Man) tryptophan glycan. Cystine bridges form between Cys310–Cys344, Cys314–Cys349, and Cys322–Cys334. N-linked (GlcNAc...) asparagine glycosylation occurs at Asn343. A helical membrane pass occupies residues 362-382; it reads YIGLVAVAVCLFLLLLALGLI. The Cytoplasmic portion of the chain corresponds to 383–898; sequence YCRKKEGLDS…GLFTVSEAEC (516 aa). The 144-residue stretch at 497–640 folds into the ZU5 domain; sequence NMAYGTFNFL…LGRFALVGEA (144 aa). The segment at 661-679 is interaction with DCC; the sequence is SLEYNIRVYCLHDTHDALK. A Death domain is found at 817 to 897; the sequence is QKIIASLDPP…AGLFTVSEAE (81 aa).

Belongs to the unc-5 family. As to quaternary structure, homodimer and homooligomer. Interacts with the cytoplasmic part of DCC. Interacts with MAGED1. Interacts with PRKCABP, possibly mediating some interaction with PKC. Interacts (via extracellular domain) with FLRT2 (via extracellular domain). Interacts (via extracellular domain) with FLRT3 (via extracellular domain). In terms of processing, phosphorylated on cytoplasmic tyrosine residues. Phosphorylated by PKC in vitro. Proteolytically cleaved by caspases during apoptosis. The cleavage does not take place when the receptor is associated with netrin ligand. Its cleavage by caspases is required to induce apoptosis. Post-translationally, the two extracellular TSRs of UNC5A contain WxxWxxWxxC motifs that can be C-mannosylated on all tryptophans. DPY19L1 preferentially mannosylates the first two tryptophans and DPY19L3 prefers the third. C-mannosylation by DPY19L1 is required for transport of UNC5A from the endoplasmic reticulum to the cell surface. As to expression, mainly expressed in regions of differentiating neurons. Expressed at early stages of neural tube development in the ventral spinal cord. In developing hindbrain, it colocalizes with a number of cranial motor neuron subpopulations from embryonic E11 to E14, while DCC is expressed by motor neurons at E12. Also expressed in non-neural structures, such as the basal plane of the hindbrain and midbrain, in the developing hypothalamus, thalamus and in the pallidum.

The protein localises to the cell membrane. Its subcellular location is the membrane raft. The protein resides in the cell projection. It localises to the neuron projection. Functionally, receptor for netrin required for axon guidance. Functions in the netrin signaling pathway and promotes neurite outgrowth in response to NTN1. Mediates axon repulsion of neuronal growth cones in the developing nervous system in response to netrin. Axon repulsion in growth cones may be mediated by its association with DCC that may trigger signaling for repulsion. It also acts as a dependence receptor required for apoptosis induction when not associated with netrin ligand. This chain is Netrin receptor UNC5A (Unc5a), found in Rattus norvegicus (Rat).